Here is a 928-residue protein sequence, read N- to C-terminus: MYCBP-associated protein (928 aa).

2 disordered regions span residues 1-38 and 164-183; these read MKKANDRQSPPKLLEKKRAKAPEQPTPPIQEEPEPVSN and EEPKPKSPKEEKRPPWAPPL. The segment covering 164 to 177 has biased composition (basic and acidic residues); the sequence is EEPKPKSPKEEKRP. Serine 557 bears the Phosphoserine mark. Position 558 is a phosphothreonine (threonine 558). The residue at position 564 (serine 564) is a Phosphoserine. Residues 786–881 are disordered; sequence IPDEGQKSPP…SSATSQEPID (96 aa). A compositionally biased stretch (basic and acidic residues) spans 806–865; that stretch reads LGKEDRRGGAQEKKQLSARDKEEKKGSKTPSKEDRLNSKKQKAKDDKKVVKSTSRDRLLS.

As to quaternary structure, interacts with MYCBP. As to expression, expressed in brain, retina, testis, heart and lung. Not detected in liver, kidney or intestine. In brain, highly abundant in CNS neurons of the hippocampus and cerebellum. Strongly expressed in cochlea and vestibular sensory epithelia. In both the organ of Corti and the vestibular organ, expression is restricted to hair cells.

Its subcellular location is the cytoplasm. It is found in the membrane. May play a role in spermatogenesis. May be involved in synaptic processes. This chain is MYCBP-associated protein, found in Rattus norvegicus (Rat).